The chain runs to 101 residues: Small ribosomal subunit protein uS14 (101 aa).

It belongs to the universal ribosomal protein uS14 family. As to quaternary structure, part of the 30S ribosomal subunit. Contacts proteins S3 and S10.

Binds 16S rRNA, required for the assembly of 30S particles and may also be responsible for determining the conformation of the 16S rRNA at the A site. This Brucella anthropi (strain ATCC 49188 / DSM 6882 / CCUG 24695 / JCM 21032 / LMG 3331 / NBRC 15819 / NCTC 12168 / Alc 37) (Ochrobactrum anthropi) protein is Small ribosomal subunit protein uS14.